The chain runs to 555 residues: Transcription factor kojR (555 aa).

Positions C21–C47 form a DNA-binding region, zn(2)-C6 fungal-type. Positions P51–P73 are disordered.

It localises to the nucleus. Transcription factor that regulates the gene cluster that mediates the biosynthesis of 5-hydroxy-2-hydroxymethyl-1,4-pyrone, also know as kojic acid, a by-product in the fermentation process of malting rice that acts as a chelation agent. Mediates the expression of kojA and kojT via binding of an 11-nucleotide palindromic sequence, 5'-CGRCTWAGYCG-3' (R=A/G, W=A/T, Y=C/T) within the target gene promoters. In Aspergillus flavus (strain ATCC 200026 / FGSC A1120 / IAM 13836 / NRRL 3357 / JCM 12722 / SRRC 167), this protein is Transcription factor kojR.